The primary structure comprises 116 residues: Ribosome-binding factor A (116 aa).

The protein belongs to the RbfA family. In terms of assembly, monomer. Binds 30S ribosomal subunits, but not 50S ribosomal subunits or 70S ribosomes.

It localises to the cytoplasm. Functionally, one of several proteins that assist in the late maturation steps of the functional core of the 30S ribosomal subunit. Associates with free 30S ribosomal subunits (but not with 30S subunits that are part of 70S ribosomes or polysomes). Required for efficient processing of 16S rRNA. May interact with the 5'-terminal helix region of 16S rRNA. The polypeptide is Ribosome-binding factor A (Halalkalibacterium halodurans (strain ATCC BAA-125 / DSM 18197 / FERM 7344 / JCM 9153 / C-125) (Bacillus halodurans)).